The primary structure comprises 677 residues: MRLQVQIGTECVVVPCKPDDTIHAVAKKSVEKLRRLRPKLPLADDYFEVRRTVGNSLLDPEDLVSDVLKDSDFIIVAASVEETEDAKEAKKQEEIDNARAEIEKIDNRRRKVSFADSLAPMVLAPPTKLLILDGNSLLPEDLVRCEKGECAIQLSMESEDRIRKARTFLEKIASEHRAVYGVTTGFGTFSNVTIPPEKLKKLQLNLIRSHATGYGEPLAPNRARMLLALRINILAKGHSGISVENIKKMIAAFNAFCVSYVPQQGTVGCSGDLCPLAHLALGLLGEGKMWSPTTGWQPADVVLKKNNLEPLELGPKEGLALINGTQMVTALGAYTLERAHNIARQADVIAALSLDVLKGTTRAYDPDIHRIRPHRGQNLSALRLRALLHSEANPSQIAESHRNCTKVQDAYTLRCVPQVHGVVHDTIEFVREIITTEMNSATDNPLVFADREEIISGGNFHGEYPAKALDFLAIAVAELAQMSERRLERLVNKELSGLPTFLTPDGGLNSGFMTVQLCAASLVSENKVLCHPSSVDSIPTSCNQEDHVSMGGFAARKALTVVEHVEAVLAMELLAACQGIEFLKPLISTAPLHKIYQLVRSVAPPLNEDRYMKPEIDAVLEMIRENRIWEAVLPHLETLEAMEELDPDALRQFTKTPTGIVQDRSMIPISDDEESIE.

A cross-link (5-imidazolinone (Cys-Gly)) is located at residues Cys269–Gly271. 2,3-didehydroalanine (Ser) is present on Ser270.

The protein belongs to the PAL/histidase family. Contains an active site 4-methylidene-imidazol-5-one (MIO), which is formed autocatalytically by cyclization and dehydration of residues Cys-Ser-Gly.

It carries out the reaction L-histidine = trans-urocanate + NH4(+). It functions in the pathway amino-acid degradation; L-histidine degradation into L-glutamate; N-formimidoyl-L-glutamate from L-histidine: step 1/3. The sequence is that of Histidine ammonia-lyase from Caenorhabditis elegans.